Reading from the N-terminus, the 313-residue chain is MYSCTSPSGIEVSLNKPEIWEKFYPKTEMIVTRKRGRVIFPHLDYNVKGLDPDSLYSIYIHLERVDGIKYKFDAGEWKEAGKGDPILPIQYKEHPRGKRTGTEWMSEPVSFAHLKITNDPENKDQKLILAQSLHKYIPVLHIKQLDPYKGTFQMDFHGVEFRLEATQFIVVTAYQNEELTKLKVHHNKFASGFRSNGKRRLSSESENSENSPPKRSASAISSLTPPAISPPMDYTQQNPYFFNQNFFSTPQSHQPQFAAHSANAQNYNNFGAQNGAQFDWNVYYQRQWYWQQQMMMSGGIGQPQMLNNGFPNL.

A DNA-binding region (T-box) is located at residues Ile-19–Ser-195. The interval Phe-193–Ile-228 is disordered.

Its subcellular location is the nucleus. Functionally, transcription factor. Required for mesodermal induction, acting redundantly with transcription factor tbx-38. Together with tbx-38, acts by inducing cell fates in the AB lineage, thereby playing a role in development of the anterior pharynx. The protein is T-box protein 37 (tbx-37) of Caenorhabditis elegans.